Reading from the N-terminus, the 256-residue chain is 5'-nucleotidase SurE (256 aa).

Residues aspartate 8, aspartate 9, serine 40, and asparagine 94 each contribute to the a divalent metal cation site.

Belongs to the SurE nucleotidase family. The cofactor is a divalent metal cation.

It localises to the cytoplasm. The enzyme catalyses a ribonucleoside 5'-phosphate + H2O = a ribonucleoside + phosphate. Nucleotidase that shows phosphatase activity on nucleoside 5'-monophosphates. This is 5'-nucleotidase SurE from Wolbachia pipientis subsp. Culex pipiens (strain wPip).